The chain runs to 1073 residues: Semaphorin-6D (1073 aa).

A signal peptide spans 1–20 (MRVFLLCAYILLLMVSQLRA). The Extracellular segment spans residues 21 to 662 (VSFPEDDEPL…GESNQMVHMN (642 aa)). The 486-residue stretch at 27 to 512 (DEPLNTVDYH…FSSCIIRIPL (486 aa)) folds into the Sema domain. Asparagine 51 carries an N-linked (GlcNAc...) asparagine glycan. 4 disulfide bridges follow: cysteine 108/cysteine 118, cysteine 136/cysteine 145, cysteine 259/cysteine 370, and cysteine 284/cysteine 329. The N-linked (GlcNAc...) asparagine glycan is linked to asparagine 283. Asparagine 435 and asparagine 461 each carry an N-linked (GlcNAc...) asparagine glycan. Intrachain disulfides connect cysteine 477–cysteine 506, cysteine 515–cysteine 533, cysteine 521–cysteine 568, and cysteine 525–cysteine 541. The PSI domain maps to 514-569 (RCERYGSCKKSCIASRDPYCGWLSQGSCGRVTPGMLAEGYEQDTEFGNTAHLGDCH). Asparagine 631 carries an N-linked (GlcNAc...) asparagine glycan. Residues 663-683 (VLITCVFAAFVLGAFIAGVAV) traverse the membrane as a helical segment. The Cytoplasmic portion of the chain corresponds to 684 to 1073 (YCYRDMFVRK…SVRPLNKYTY (390 aa)). A phosphoserine mark is found at serine 723, serine 734, and serine 744. Disordered stretches follow at residues 744 to 775 (SRKELPPNGDTKSMVMDHRGQPPELAALPTPE), 787 to 825 (AMKSHSEKAHGHGASRKETPQFFPSSPPPHSPLSHGHIP), 839 to 874 (TSFSNSNAHKAEKKLQNIDHPLTKSSSKRDHRRSVD), 914 to 1005 (SMSE…PTPT), and 1021 to 1073 (LQPS…KYTY). Threonine 773 carries the phosphothreonine modification. Basic and acidic residues predominate over residues 790–805 (SHSEKAHGHGASRKET). 3 positions are modified to phosphoserine: serine 931, serine 957, and serine 983. The span at 931 to 942 (SPPSTLPRNSPT) shows a compositional bias: polar residues. 2 stretches are compositionally biased toward polar residues: residues 980-995 (NLNSPNGVLLSRQPSM) and 1021-1037 (LQPSLSRQSSYTSNGTL).

This sequence belongs to the semaphorin family.

It localises to the cell membrane. The protein localises to the cytoplasm. Its function is as follows. Shows growth cone collapsing activity on dorsal root ganglion (DRG) neurons in vitro. May be a stop signal for the DRG neurons in their target areas, and possibly also for other neurons. May also be involved in the maintenance and remodeling of neuronal connections. Ligand of TREM2 with PLXNA1 as coreceptor in dendritic cells, plays a role in the generation of immune responses and skeletal homeostasis. This Homo sapiens (Human) protein is Semaphorin-6D.